The primary structure comprises 1351 residues: Bromodomain-containing protein 4A (1351 aa).

7 disordered regions span residues 1–23 (MSSE…GIEG), 35–58 (PQPQ…QPKR), 168–244 (ETEL…RPPA), 285–368 (AAQP…DTKT), 478–638 (EPEE…PMSY), 700–799 (CLRK…LDSS), and 821–1334 (PDLP…PSID). The 107-residue stretch at 58–164 (RQTNQLQYLL…KLFLQKISEM (107 aa)) folds into the Bromo 1 domain. Residues 208–219 (VKPPVTPVSKPS) show a composition bias toward low complexity. Residues 220–235 (TPTPPTVTRAPTPPQT) show a composition bias toward pro residues. The span at 327 to 343 (PRKENGRQIRPTKKTEV) shows a compositional bias: basic and acidic residues. A compositionally biased stretch (pro residues) spans 349-359 (PAPPVLHPQPA). The 110-residue stretch at 366–475 (TKTSEQLRYC…DVFEMRFAKM (110 aa)) folds into the Bromo 2 domain. Residues 482–504 (APAPVPSLAPGPPAPSIKGPPPT) show a composition bias toward pro residues. The NPS region stretch occupies residues 504–522 (TSSDSSSDSTSDSESSSDS). The segment covering 505 to 517 (SSDSSSDSTSDSE) has biased composition (low complexity). A BID region region spans residues 543-598 (QLAALSQPQPNKPKKKEREKRKEKHKRKEEVEEPRKGRIREPPAKKPKKSVQGSGG). The segment covering 554-569 (KPKKKEREKRKEKHKR) has biased composition (basic residues). Over residues 570–586 (KEEVEEPRKGRIREPPA) the composition is skewed to basic and acidic residues. The span at 607–621 (PPPAPRPARPAPPSA) shows a compositional bias: pro residues. Positions 624 to 708 (ESSEEETQRC…SCLRKKRKSQ (85 aa)) constitute an NET domain. The segment covering 629-638 (ETQRCRPMSY) has biased composition (basic and acidic residues). The span at 725 to 738 (SSSESESSSESSTS) shows a compositional bias: low complexity. The segment covering 751 to 767 (QKKKGHSGRESRKHHHP) has biased composition (basic residues). Residues 788-799 (PSYPLPSSLDSS) show a composition bias toward low complexity. The span at 872–890 (PAMPPSASPPPPAPQPPQQ) shows a compositional bias: pro residues. A compositionally biased stretch (basic residues) spans 892-902 (HVHHHHHHHAQ). Residues 927–953 (LQKSQQPPTQSPIHSLLTSVKVQSQTP) are compositionally biased toward polar residues. The span at 968-983 (VYPPPPSTATTAPPPA) shows a compositional bias: pro residues. 2 stretches are compositionally biased toward low complexity: residues 994 to 1003 (PVVPQQLPAG) and 1011 to 1028 (QQQQ…SHQQ). A C-terminal (CTD) region region spans residues 1051 to 1350 (RQQKQETYPG…LMEIFEQNLF (300 aa)). Pro residues predominate over residues 1075–1089 (PPVPPYPGLTHPPSP). Basic and acidic residues-rich tracts occupy residues 1150–1161 (PRPDLKKMDGGR) and 1176–1197 (PEKE…DIKI). Polar residues predominate over residues 1214-1224 (PTSAGKSTSDS). A compositionally biased stretch (basic and acidic residues) spans 1226–1284 (ELFRRQAREKEERERALKLQAEQAERVRREQDRMSRTREDDEVQDQARKAHEEARRRQE). Over residues 1301–1310 (SPAQSSQPMM) the composition is skewed to low complexity. Basic and acidic residues predominate over residues 1311–1323 (DQREMARKREQER).

Belongs to the BET family.

The protein localises to the nucleus. It is found in the chromosome. Its function is as follows. Chromatin reader protein that recognizes and binds acetylated histones and plays a key role in transmission of epigenetic memory across cell divisions and transcription regulation. Remains associated with acetylated chromatin throughout the entire cell cycle and provides epigenetic memory for postmitotic G1 gene transcription by preserving acetylated chromatin status and maintaining high-order chromatin structure. During interphase, plays a key role in regulating the transcription of signal-inducible genes by associating with the P-TEFb complex and recruiting it to promoters. The sequence is that of Bromodomain-containing protein 4A (brd4-a) from Xenopus laevis (African clawed frog).